A 215-amino-acid chain; its full sequence is MSCTIEKVLADAKELVERLREHDGAAESLIEQTTTLNKRVEAMKQYQEEVQELNEIARHRPRSTLVLGIQQENRQIRQLQHENKELRTSLKEHQSALELIMSKYREQMFRLLMASKKDDPGVIMKLKEQHSKELQAHIEKINEMTAVMRRAIEMDEQRGDREHNRIIKLEQENKRLREILQITKISFLNLHKEDASENSPHSAPVPNTDLILRKS.

A coiled-coil region spans residues 12-186 (AKELVERLRE…REILQITKIS (175 aa)). Residues 193–215 (EDASENSPHSAPVPNTDLILRKS) form a disordered region.

This sequence belongs to the SIKE family.

It localises to the cytoplasm. The chain is FGFR1 oncogene partner 2 homolog (fgfr1op2) from Xenopus laevis (African clawed frog).